The sequence spans 286 residues: Thymidylate synthase (286 aa).

Residue 140 to 141 (RR) coordinates dUMP. The Nucleophile role is filled by cysteine 161. Residues 185–188 (RSND), asparagine 196, and 226–228 (HIY) contribute to the dUMP site. Aspartate 188 serves as a coordination point for (6R)-5,10-methylene-5,6,7,8-tetrahydrofolate. Alanine 285 contributes to the (6R)-5,10-methylene-5,6,7,8-tetrahydrofolate binding site.

Belongs to the thymidylate synthase family. Bacterial-type ThyA subfamily. As to quaternary structure, homodimer.

It localises to the cytoplasm. It catalyses the reaction dUMP + (6R)-5,10-methylene-5,6,7,8-tetrahydrofolate = 7,8-dihydrofolate + dTMP. It functions in the pathway pyrimidine metabolism; dTTP biosynthesis. Its function is as follows. Catalyzes the reductive methylation of 2'-deoxyuridine-5'-monophosphate (dUMP) to 2'-deoxythymidine-5'-monophosphate (dTMP) while utilizing 5,10-methylenetetrahydrofolate (mTHF) as the methyl donor and reductant in the reaction, yielding dihydrofolate (DHF) as a by-product. This enzymatic reaction provides an intracellular de novo source of dTMP, an essential precursor for DNA biosynthesis. The polypeptide is Thymidylate synthase (Streptococcus thermophilus (strain CNRZ 1066)).